The chain runs to 230 residues: Bidirectional sugar transporter SWEET2b (230 aa).

The Extracellular segment spans residues 1 to 6 (MDSLYD). Residues 7 to 27 (ISCFAAGLAGNIFALALFLSP) form a helical membrane-spanning segment. Residues 13–98 (GLAGNIFALA…CLFIFYADSR (86 aa)) enclose the MtN3/slv 1 domain. Residues 28 to 45 (VTTFKRILKAKSTERFDG) lie on the Cytoplasmic side of the membrane. A helical transmembrane segment spans residues 46-66 (LPYLFSLLNCLICLWYGLPWV). Residues 67-72 (ADGRLL) are Extracellular-facing. Residues 73 to 93 (VATVNGIGAVFQLAYICLFIF) traverse the membrane as a helical segment. Topologically, residues 94–103 (YADSRKTRMK) are cytoplasmic. A helical transmembrane segment spans residues 104–124 (IIGLLVLVVCGFALVSHASVF). Residues 125–137 (FFDQPLRQQFVGA) lie on the Extracellular side of the membrane. The MtN3/slv 2 domain maps to 133 to 217 (QFVGAVSMAS…LALYAYYSRK (85 aa)). A helical membrane pass occupies residues 138–158 (VSMASLISMFASPLAVMGVVI). Residues 159-167 (RSESVEFMP) lie on the Cytoplasmic side of the membrane. A helical transmembrane segment spans residues 168-188 (FYLSLSTFLMSASFALYGLLL). Topologically, residues 189-190 (RD) are extracellular. The helical transmembrane segment at 191-211 (FFIYFPNGLGLILGAMQLALY) threads the bilayer. The Cytoplasmic portion of the chain corresponds to 212–230 (AYYSRKWRGQDSSAPLLLA).

The protein belongs to the SWEET sugar transporter family. As to quaternary structure, forms homooligomers and/or heterooligomers.

Its subcellular location is the cell membrane. In terms of biological role, mediates both low-affinity uptake and efflux of sugar across the plasma membrane. The sequence is that of Bidirectional sugar transporter SWEET2b (SWEET2B) from Oryza sativa subsp. indica (Rice).